We begin with the raw amino-acid sequence, 199 residues long: 5'-deoxynucleotidase ESA_00928 (199 aa).

Substrate contacts are provided by residues 18–19 (RW) and His-33. The HD domain occupies 30–142 (VSEHSLQVAM…VKQADALCAY (113 aa)). A divalent metal cation contacts are provided by His-33, His-68, and Asp-69. Residues Asp-69, 77–80 (DLPT), and Asp-137 each bind substrate. Position 137 (Asp-137) interacts with a divalent metal cation.

It belongs to the 5DNU family. In terms of assembly, homodimer. It depends on a divalent metal cation as a cofactor.

The protein resides in the cytoplasm. The enzyme catalyses a 2'-deoxyribonucleoside 5'-phosphate + H2O = a 2'-deoxyribonucleoside + phosphate. Its function is as follows. Catalyzes the strictly specific dephosphorylation of 2'-deoxyribonucleoside 5'-monophosphates. The protein is 5'-deoxynucleotidase ESA_00928 of Cronobacter sakazakii (strain ATCC BAA-894) (Enterobacter sakazakii).